The following is a 638-amino-acid chain: Chaperone protein DnaK (638 aa).

At Thr-199 the chain carries Phosphothreonine; by autocatalysis. Positions 600–638 are disordered; that stretch reads EINQKKSEENLKKEDTSSESKKDENVVDAEFEEIKDPKK. The span at 602-624 shows a compositional bias: basic and acidic residues; the sequence is NQKKSEENLKKEDTSSESKKDEN.

It belongs to the heat shock protein 70 family.

Its function is as follows. Acts as a chaperone. This is Chaperone protein DnaK from Buchnera aphidicola subsp. Schizaphis graminum (strain Sg).